A 558-amino-acid polypeptide reads, in one-letter code: Oligo-1,6-glucosidase (558 aa).

Ca(2+) contacts are provided by Asp21, Asn23, Asp25, and Asp29. Catalysis depends on Asp199, which acts as the Nucleophile. The Proton donor role is filled by Glu255.

This sequence belongs to the glycosyl hydrolase 13 family.

It is found in the cytoplasm. The catalysed reaction is Hydrolysis of (1-&gt;6)-alpha-D-glucosidic linkages in some oligosaccharides produced from starch and glycogen by alpha-amylase, and in isomaltose.. This Bacillus cereus protein is Oligo-1,6-glucosidase (malL).